Here is a 493-residue protein sequence, read N- to C-terminus: Putative MgpC-like protein MPN_414 (493 aa).

Residues 1-14 are compositionally biased toward polar residues; the sequence is MKPTSLPKNFTNNP. Disordered regions lie at residues 1–92 and 441–493; these read MKPT…GHNS and KSAR…SGNH. 2 stretches are compositionally biased toward basic and acidic residues: residues 25-34 and 44-56; these read DNGRAYRKLN and DSTK…DKDG. Composition is skewed to polar residues over residues 72–92 and 445–472; these read VSST…GHNS and ENAQ…SPCR. Positions 482 to 493 are enriched in basic and acidic residues; it reads RVTEEERSSGNH.

Belongs to the MgpC family.

This is Putative MgpC-like protein MPN_414 from Mycoplasma pneumoniae (strain ATCC 29342 / M129 / Subtype 1) (Mycoplasmoides pneumoniae).